The following is a 560-amino-acid chain: NAD-dependent malic enzyme (560 aa).

Catalysis depends on Y100, which acts as the Proton donor. R153 contacts NAD(+). K171 serves as the catalytic Proton acceptor. Positions 242, 243, and 266 each coordinate a divalent metal cation. D266 and N413 together coordinate NAD(+).

Belongs to the malic enzymes family. Homotetramer. The cofactor is Mg(2+). Mn(2+) serves as cofactor.

It catalyses the reaction (S)-malate + NAD(+) = pyruvate + CO2 + NADH. It carries out the reaction oxaloacetate + H(+) = pyruvate + CO2. In Psychrobacter arcticus (strain DSM 17307 / VKM B-2377 / 273-4), this protein is NAD-dependent malic enzyme.